The primary structure comprises 185 residues: Ribosome-recycling factor (185 aa).

This sequence belongs to the RRF family.

It localises to the cytoplasm. Its function is as follows. Responsible for the release of ribosomes from messenger RNA at the termination of protein biosynthesis. May increase the efficiency of translation by recycling ribosomes from one round of translation to another. This chain is Ribosome-recycling factor, found in Frankia casuarinae (strain DSM 45818 / CECT 9043 / HFP020203 / CcI3).